Consider the following 132-residue polypeptide: MVMTDPIADMLTRIRNANMVRHEKLEVPASKIKKEIAELLKREGFIRDVEYIEDNKQGILRIFLKYGANNERVITGLKRISKPGLRVYAKADEVPRVLNGLGIALLSTSKGVMTDKDARQLQTGGEVVAYVW.

This sequence belongs to the universal ribosomal protein uS8 family. As to quaternary structure, part of the 30S ribosomal subunit. Contacts proteins S5 and S12.

Functionally, one of the primary rRNA binding proteins, it binds directly to 16S rRNA central domain where it helps coordinate assembly of the platform of the 30S subunit. This Bacillus cytotoxicus (strain DSM 22905 / CIP 110041 / 391-98 / NVH 391-98) protein is Small ribosomal subunit protein uS8.